Consider the following 216-residue polypeptide: Uracil phosphoribosyltransferase (216 aa).

30–34 (KNLVK) provides a ligand contact to GTP. 5-phospho-alpha-D-ribose 1-diphosphate is bound by residues Arg80, Arg105, and 140–148 (DPMIATGST). Residues Ile203 and 208–210 (GDA) each bind uracil. Asp209 is a 5-phospho-alpha-D-ribose 1-diphosphate binding site.

This sequence belongs to the UPRTase family. The cofactor is Mg(2+).

The catalysed reaction is UMP + diphosphate = 5-phospho-alpha-D-ribose 1-diphosphate + uracil. It functions in the pathway pyrimidine metabolism; UMP biosynthesis via salvage pathway; UMP from uracil: step 1/1. Allosterically activated by GTP. In terms of biological role, catalyzes the conversion of uracil and 5-phospho-alpha-D-ribose 1-diphosphate (PRPP) to UMP and diphosphate. This chain is Uracil phosphoribosyltransferase, found in Sulfolobus acidocaldarius (strain ATCC 33909 / DSM 639 / JCM 8929 / NBRC 15157 / NCIMB 11770).